The primary structure comprises 419 residues: MKCLVALFLSLSLVACQYDDYDTERKNNNMLSSMNILDLLDSFGLNIKARIAHVRRVAGRIRLTLDIGLGNGDVERESEEAEGEGTDGRGGGEGEREGWGGEREGGEGEREGGEGEREGREGEREGKSSESNESPEDFIGPPVDMCAGESRRGSPSIGCIAAECCQHSFYINSLCPGSSVCCFSMDVCDRLPVPVIPPFPTDPGTLPPPPPIPDSQTTVSPNQPSSYMCHGDFMKLMPKGADQRTARQDNLAYAGVRASNKLVDNDLAELNKRKDCYVQAGKNHCIHPAVIAAIASRETRGGKLLYSTNGYGDGGRAYGIMQCDGGASGLGDICKKYPWDSCEHINQLTDIILLNYVNQMKTKHPSWPAHYQLKGGVSAYNAGVGNVQTIAGMDAGTTNDDYSNDVIARAQRLVNAHGW.

A signal peptide spans 1–16 (MKCLVALFLSLSLVAC). Positions 74-152 (VERESEEAEG…VDMCAGESRR (79 aa)) are disordered. Positions 76–85 (RESEEAEGEG) are enriched in acidic residues. Over residues 86–130 (TDGRGGGEGEREGWGGEREGGEGEREGGEGEREGREGEREGKSSE) the composition is skewed to basic and acidic residues.

The protein in the C-terminal section; belongs to the glycosyl hydrolase 23 family. In terms of tissue distribution, component of the acid-insoluble organic matrix of calcified layers of the shell (at protein level).

The protein localises to the secreted. This is Glycine, glutamate and proline-rich protein from Lottia gigantea (Giant owl limpet).